Here is a 101-residue protein sequence, read N- to C-terminus: Urease subunit beta (101 aa).

It belongs to the urease beta subunit family. Heterotrimer of UreA (gamma), UreB (beta) and UreC (alpha) subunits. Three heterotrimers associate to form the active enzyme.

Its subcellular location is the cytoplasm. It catalyses the reaction urea + 2 H2O + H(+) = hydrogencarbonate + 2 NH4(+). The protein operates within nitrogen metabolism; urea degradation; CO(2) and NH(3) from urea (urease route): step 1/1. The chain is Urease subunit beta from Rhizobium meliloti (strain 1021) (Ensifer meliloti).